The following is a 298-amino-acid chain: uncharacterized protein (298 aa).

It is found in the cytoplasm. Its subcellular location is the nucleus. This is an uncharacterized protein from Schizosaccharomyces pombe (strain 972 / ATCC 24843) (Fission yeast).